Reading from the N-terminus, the 483-residue chain is FAD-dependent oxidoreductase oblC (483 aa).

Positions 1–21 (MRSVTSLVSFSACLLASSVTA) are cleaved as a signal peptide. Asparagine 100, asparagine 137, asparagine 190, and asparagine 240 each carry an N-linked (GlcNAc...) asparagine glycan.

It belongs to the beta-cyclopiazonate dehydrogenase family. FAD serves as cofactor.

Its pathway is secondary metabolite biosynthesis; terpenoid biosynthesis. In terms of biological role, FAD-dependent oxidoreductase; part of the gene cluster that mediates the biosynthesis of the sesterterpenes ophiobolins, fungal phytotoxins with potential anti-cancer activities. The first step of the pathway is performed by the sesterterpene synthase oblA that possesses both prenyl transferase and terpene cyclase activity, converting isopentenyl diphosphate and dimethylallyl diphosphate into geranylfarnesyl diphosphate (GFPP) and further converting GFPP into ophiobolin F, respectively. Other sesterterpenoids (C(25) terpenoids) are found as minor products of oblA. The cytochrome P450 monooxygenase oblB then catalyzes a four-step oxidative transformation of ophiobolin F to yield ophiobolin C. The FAD-dependent oxidoreductase oblC might be involved in a later oxidation step that produces ophiobolin A. In Cochliobolus heterostrophus (strain C5 / ATCC 48332 / race O) (Southern corn leaf blight fungus), this protein is FAD-dependent oxidoreductase oblC.